The primary structure comprises 707 residues: Anti-sigma-I factor RsgI9 (707 aa).

Residues 1 to 149 (MKITGVIVRI…NFSRISNIKN (149 aa)) are Cytoplasmic-facing. The RsgI N-terminal anti-sigma domain occupies 3 to 50 (ITGVIVRIHKDRAIIRTDDNRLLAVKRHNDMMVGQIVSFDANEVHKVE). Residues 150–172 (FSRIASIAAAFVLIFLFGRNVML) form a helical membrane-spanning segment. At 173-707 (NNSSDSEYAY…DSEEKKEYIQ (535 aa)) the chain is on the extracellular side. Positions 256 to 283 (NDKNKKTRDKREEKIDELKETIEQGIEA) form a coiled coil. The disordered stretch occupies residues 345-392 (EDNTELAPTPTPVPPETPEPTPTPTASEATPSNSPVESKSPEAVPELG). Residues 353–367 (TPTPVPPETPEPTPT) show a composition bias toward pro residues. Over residues 368–379 (PTASEATPSNSP) the composition is skewed to low complexity.

It localises to the cell membrane. The polypeptide is Anti-sigma-I factor RsgI9 (Acetivibrio thermocellus (strain ATCC 27405 / DSM 1237 / JCM 9322 / NBRC 103400 / NCIMB 10682 / NRRL B-4536 / VPI 7372) (Clostridium thermocellum)).